A 554-amino-acid polypeptide reads, in one-letter code: CTP synthase (554 aa).

Residues 1–265 are amidoligase domain; sequence MTPLIFVTGG…DEIVIDQFKL (265 aa). A CTP-binding site is contributed by Ser13. Ser13 contacts UTP. Residues 14–19 and Asp71 each bind ATP; that span reads SLGKGI. Residues Asp71 and Glu139 each contribute to the Mg(2+) site. Residues 146–148, 186–191, and Lys222 contribute to the CTP site; these read DIE and KTKPTQ. UTP is bound by residues 186 to 191 and Lys222; that span reads KTKPTQ. One can recognise a Glutamine amidotransferase type-1 domain in the interval 292-545; that stretch reads TIAVVGKYVD…VKASRARKAG (254 aa). Position 353 (Gly353) interacts with L-glutamine. Catalysis depends on Cys380, which acts as the Nucleophile; for glutamine hydrolysis. L-glutamine contacts are provided by residues 381–384, Glu404, and Arg471; that span reads YGMQ. Catalysis depends on residues His518 and Glu520.

This sequence belongs to the CTP synthase family. In terms of assembly, homotetramer.

It carries out the reaction UTP + L-glutamine + ATP + H2O = CTP + L-glutamate + ADP + phosphate + 2 H(+). It catalyses the reaction L-glutamine + H2O = L-glutamate + NH4(+). The catalysed reaction is UTP + NH4(+) + ATP = CTP + ADP + phosphate + 2 H(+). It participates in pyrimidine metabolism; CTP biosynthesis via de novo pathway; CTP from UDP: step 2/2. With respect to regulation, allosterically activated by GTP, when glutamine is the substrate; GTP has no effect on the reaction when ammonia is the substrate. The allosteric effector GTP functions by stabilizing the protein conformation that binds the tetrahedral intermediate(s) formed during glutamine hydrolysis. Inhibited by the product CTP, via allosteric rather than competitive inhibition. Catalyzes the ATP-dependent amination of UTP to CTP with either L-glutamine or ammonia as the source of nitrogen. Regulates intracellular CTP levels through interactions with the four ribonucleotide triphosphates. The polypeptide is CTP synthase (Xylella fastidiosa (strain M12)).